The following is a 349-amino-acid chain: Phosphoribosylformylglycinamidine cyclo-ligase (349 aa).

The protein belongs to the AIR synthase family.

The protein resides in the cytoplasm. It catalyses the reaction 2-formamido-N(1)-(5-O-phospho-beta-D-ribosyl)acetamidine + ATP = 5-amino-1-(5-phospho-beta-D-ribosyl)imidazole + ADP + phosphate + H(+). It participates in purine metabolism; IMP biosynthesis via de novo pathway; 5-amino-1-(5-phospho-D-ribosyl)imidazole from N(2)-formyl-N(1)-(5-phospho-D-ribosyl)glycinamide: step 2/2. The polypeptide is Phosphoribosylformylglycinamidine cyclo-ligase (Bordetella pertussis (strain Tohama I / ATCC BAA-589 / NCTC 13251)).